Reading from the N-terminus, the 1215-residue chain is Homeodomain-interacting protein kinase 3 (1215 aa).

Residue lysine 27 forms a Glycyl lysine isopeptide (Lys-Gly) (interchain with G-Cter in SUMO2) linkage. Residues 197–525 (YEVLDFLGRG…PAETLNHPFV (329 aa)) enclose the Protein kinase domain. Residues 203 to 211 (LGRGTFGQV) and lysine 226 contribute to the ATP site. Catalysis depends on aspartate 322, which acts as the Proton acceptor. Tyrosine 359 carries the phosphotyrosine modification. The interaction with AR stretch occupies residues 767–944 (QNRGILVKLM…NSMSDEEQES (178 aa)). Residues 796–891 (NTNIPHSAFI…SQRHSLRECK (96 aa)) are interaction with FAS. Positions 855–1011 (QTIIIADSPS…ENGLNADEHM (157 aa)) are required for localization to nuclear speckles. Positions 866–918 (AVSVITISSDTDEEETSQRHSLRECKGSLDCEACQSTLNIDRMCSLSSPDSTL) are SUMO interaction motifs (SIM); required for nuclear localization and kinase activity. The tract at residues 870-880 (ITISSDTDEEE) is interaction with UBL1. Residues 912 to 929 (SSPDSTLSTSSSGQSSPS) are compositionally biased toward low complexity. The segment at 912-987 (SSPDSTLSTS…ELVSSADTET (76 aa)) is disordered. Residues 945–957 (SCDTVDGSPTSDS) are compositionally biased toward polar residues. Lysine 1208 participates in a covalent cross-link: Glycyl lysine isopeptide (Lys-Gly) (interchain with G-Cter in SUMO).

Belongs to the protein kinase superfamily. CMGC Ser/Thr protein kinase family. HIPK subfamily. In terms of assembly, interacts with Nkx1-2. Interacts with FAS and DAXX. Probably part of a complex consisting of HIPK3, FAS and FADD. Interacts with and stabilizes ligand-bound androgen receptor (AR). Interacts with UBL1/SUMO-1. Binds to NR5A1/SF1, SPEN/MINT and RUNX2. Autophosphorylated, but autophosphorylation is not required for catalytic activity. Post-translationally, may be sumoylated. Overexpressed in multidrug resistant cells. Highly expressed in heart and skeletal muscle, and at lower levels in placenta, pancreas, brain, spleen, prostate, thymus, testis, small intestine, colon and leukocytes. Not found in liver and lung.

It localises to the cytoplasm. The protein localises to the nucleus. It carries out the reaction L-seryl-[protein] + ATP = O-phospho-L-seryl-[protein] + ADP + H(+). It catalyses the reaction L-threonyl-[protein] + ATP = O-phospho-L-threonyl-[protein] + ADP + H(+). Functionally, serine/threonine-protein kinase involved in transcription regulation, apoptosis and steroidogenic gene expression. Phosphorylates JUN and RUNX2. Seems to negatively regulate apoptosis by promoting FADD phosphorylation. Enhances androgen receptor-mediated transcription. May act as a transcriptional corepressor for NK homeodomain transcription factors. The phosphorylation of NR5A1 activates SF1 leading to increased steroidogenic gene expression upon cAMP signaling pathway stimulation. In osteoblasts, supports transcription activation: phosphorylates RUNX2 that synergizes with SPEN/MINT to enhance FGFR2-mediated activation of the osteocalcin FGF-responsive element (OCFRE). This chain is Homeodomain-interacting protein kinase 3 (HIPK3), found in Homo sapiens (Human).